The chain runs to 2494 residues: Nuclear receptor corepressor 1 (2494 aa).

Residues 1-33 show a composition bias toward polar residues; that stretch reads MSSSGYPPNQGAFSTEQGRYSSHPVQYTFPSSR. 4 disordered regions span residues 1–38, 53–106, 134–170, and 198–222; these read MSSS…QQEF, LLQQ…PRLD, SEVK…KLSK, and QQQL…PVEQ. Residues 71–82 show a composition bias toward basic and acidic residues; the sequence is PVSDRPQDRRQG. The span at 83 to 92 shows a compositional bias: polar residues; the sequence is YEQQYHSVTQ. 3 stretches are compositionally biased toward basic and acidic residues: residues 93 to 106, 134 to 148, and 204 to 213; these read NEHE…PRLD, SEVK…KHET, and EAAKPPEPEK. The interval 154–304 is interaction with tbl1xr1; sequence SGQPGEEQEA…REQNICQRYD (151 aa). The stretch at 168–208 forms a coiled coil; sequence LSKEELIQSMDRVDREIAKVEQQILKLKKKQQQLEEEAAKP. The SANT 1 domain occupies 427 to 478; the sequence is QFMNVWTDHEKEIFKEKFVQHPKNFGLIASYLERKTVSDCVLYYYLTKKNEN. 8 disordered regions span residues 488 to 638, 671 to 913, 981 to 1007, 1081 to 1124, 1413 to 1434, 1488 to 1585, 1745 to 1845, and 1912 to 1987; these read PKRR…VEHG, NLLQ…LDSK, RQRQ…PNMD, GARL…GTPG, IHEI…ESSR, MGER…TQRE, LAFP…QESI, and EVVK…AHTK. Basic and acidic residues-rich tracts occupy residues 502-525 and 535-548; these read AQEE…KEEE and KEEL…RTDA. Residues 502 to 549 adopt a coiled-coil conformation; that stretch reads AQEEKEIEKVEEEKAERNDKKEEERREEEEKEEKEELRDGTKDRTDAI. Positions 582–616 are enriched in low complexity; sequence ASEAAAAANAASTATTAPATTTSTTATTTTAALVP. Residues 617–629 are compositionally biased toward pro residues; the sequence is VAPPPEEPTPPPT. The 47-residue stretch at 622-668 folds into the SANT 2 domain; the sequence is EEPTPPPTQEQSLVEHGRNWGAIAKMVGSKSESQCKNFYFNYKRRHN. Over residues 692-702 the composition is skewed to polar residues; it reads QCESVASTVSA. The stretch at 698-726 forms a coiled coil; it reads STVSAQEDEENEASNEEENAEDSEGAENS. The segment covering 703-722 has biased composition (acidic residues); it reads QEDEENEASNEEENAEDSEG. Positions 723–741 are enriched in low complexity; sequence AENSSDTESAPSPSPAEAA. The segment covering 766–779 has biased composition (polar residues); it reads ASKSVSDSSPTPTV. The segment covering 829–864 has biased composition (basic and acidic residues); the sequence is AEPDEVESKPSESAEVKIEEDTKDQDMERLMDRAEA. Composition is skewed to polar residues over residues 881–892, 993–1004, and 1104–1124; these read ESQSDNDSSATC, MSASPGNMSKSP, and ATSS…GTPG. The span at 1488–1504 shows a compositional bias: basic and acidic residues; it reads MGERSKYEDTKSSEAIR. Polar residues predominate over residues 1508 to 1519; that stretch reads TSVVSSGPSVLR. Residues 1548 to 1561 show a composition bias toward low complexity; sequence PSPMSRSSPMARSA. The stretch at 1771-1810 forms a coiled coil; the sequence is VSAERERERERDRERDREREKEQRERERDRERERERLAAA. A compositionally biased stretch (basic and acidic residues) spans 1773 to 1807; it reads AERERERERDRERDREREKEQRERERDRERERERL. The segment covering 1835-1845 has biased composition (polar residues); sequence PSPSVRAQESI. Over residues 1914–1935 the composition is skewed to basic and acidic residues; the sequence is VKPKEMKHDPARSEESLSRRNV. Over residues 1953–1972 the composition is skewed to low complexity; it reads QSPYTSSSFSGSKSQGQPSP. Residues 1978–1987 are compositionally biased toward basic and acidic residues; it reads AGKEKTAHTK. A CORNR box 1 motif is present at residues 2008 to 2012; the sequence is IDVII. Residues 2018–2105 are disordered; the sequence is SDKDGRDRNS…PSPQQTIPGH (88 aa). Over residues 2027-2036 the composition is skewed to low complexity; that stretch reads SQSSDSSSSH. The segment covering 2039-2048 has biased composition (basic and acidic residues); that stretch reads HRYDAPRDTI. Residues 2088 to 2102 are compositionally biased toward polar residues; it reads RYRQQQESPSPQQTI. The short motif at 2119–2123 is the CORNR box 2 element; it reads ICQII. Polar residues predominate over residues 2135-2177; sequence QALQQPPASTFQSTNPSSTPVRTKASSRFSPESQVQPVHNQRP. A disordered region spans residues 2135 to 2216; it reads QALQQPPAST…YEPISPPQAP (82 aa). The segment covering 2186-2205 has biased composition (basic and acidic residues); sequence VLDRPRGRPGKSPDRGHISE. A CORNR box 3 motif is present at residues 2322–2326; it reads LEDII. 2 disordered regions span residues 2346 to 2413 and 2446 to 2494; these read GVAQ…SVHS and MLNS…DSDE. A compositionally biased stretch (basic residues) spans 2376 to 2390; it reads HKQKLISKYGSRKTK. Polar residues-rich tracts occupy residues 2446-2472 and 2485-2494; these read MLNS…QQSR and QYETLSDSDE.

It belongs to the N-CoR nuclear receptor corepressors family. As to quaternary structure, forms a large corepressor complex that contains sin3a/b, histone deacetylases hdac1 and hdac2, rbbp4 and possibly rbbp7. Interacts with the thyroid receptor (TR, composed of rxra and thrb) and the retinoid acid receptor (RAR, composed of rxra and rara) in the absence of ligand. Interacts with tbl1xr1. Interacts with zbtb33/kaiso.

It is found in the nucleus. Mediates transcriptional repression by certain nuclear receptors. Participates in complexes which promote histone deacetylation and the formation of repressive chromatin structures which may impede access by the basal transcription machinery. In association with hdac3, may play a role in the regulation of the circadian clock. The sequence is that of Nuclear receptor corepressor 1 (ncor1) from Xenopus tropicalis (Western clawed frog).